A 453-amino-acid chain; its full sequence is Probable 1,4-beta-D-glucan cellobiohydrolase A (453 aa).

The signal sequence occupies residues 1–17 (MYQRALLFSALATAVSA). E226 acts as the Nucleophile in catalysis. E231 (proton donor) is an active-site residue. The N-linked (GlcNAc...) asparagine glycan is linked to N284.

This sequence belongs to the glycosyl hydrolase 7 (cellulase C) family.

Its subcellular location is the secreted. It catalyses the reaction Hydrolysis of (1-&gt;4)-beta-D-glucosidic linkages in cellulose and cellotetraose, releasing cellobiose from the non-reducing ends of the chains.. In terms of biological role, the biological conversion of cellulose to glucose generally requires three types of hydrolytic enzymes: (1) Endoglucanases which cut internal beta-1,4-glucosidic bonds; (2) Exocellobiohydrolases that cut the disaccharide cellobiose from the non-reducing end of the cellulose polymer chain; (3) Beta-1,4-glucosidases which hydrolyze the cellobiose and other short cello-oligosaccharides to glucose. The sequence is that of Probable 1,4-beta-D-glucan cellobiohydrolase A (cbhA) from Aspergillus clavatus (strain ATCC 1007 / CBS 513.65 / DSM 816 / NCTC 3887 / NRRL 1 / QM 1276 / 107).